Consider the following 315-residue polypeptide: Transaldolase (315 aa).

The active-site Schiff-base intermediate with substrate is Lys-131.

The protein belongs to the transaldolase family. Type 1 subfamily. In terms of assembly, homodimer.

The protein localises to the cytoplasm. It catalyses the reaction D-sedoheptulose 7-phosphate + D-glyceraldehyde 3-phosphate = D-erythrose 4-phosphate + beta-D-fructose 6-phosphate. It participates in carbohydrate degradation; pentose phosphate pathway; D-glyceraldehyde 3-phosphate and beta-D-fructose 6-phosphate from D-ribose 5-phosphate and D-xylulose 5-phosphate (non-oxidative stage): step 2/3. In terms of biological role, transaldolase is important for the balance of metabolites in the pentose-phosphate pathway. This Actinobacillus pleuropneumoniae serotype 3 (strain JL03) protein is Transaldolase.